The following is a 347-amino-acid chain: Aromatic amino acid aminotransferase (347 aa).

An N6-(pyridoxal phosphate)lysine modification is found at K214.

This sequence belongs to the class-II pyridoxal-phosphate-dependent aminotransferase family. As to quaternary structure, homodimer. Requires pyridoxal 5'-phosphate as cofactor.

It catalyses the reaction an aromatic L-alpha-amino acid + 2-oxoglutarate = an aromatic oxo-acid + L-glutamate. In terms of biological role, aminotransferase that catalyzes the conversion of aromatic amino acids and 2-oxoglutarate into corresponding aromatic oxo acids and L-glutamate. In Mycobacteroides abscessus (strain ATCC 19977 / DSM 44196 / CCUG 20993 / CIP 104536 / JCM 13569 / NCTC 13031 / TMC 1543 / L948) (Mycobacterium abscessus), this protein is Aromatic amino acid aminotransferase.